A 206-amino-acid polypeptide reads, in one-letter code: CASP-like protein 1F1 (206 aa).

Residues Met1–Lys43 lie on the Cytoplasmic side of the membrane. Residues Leu44–Ala64 form a helical membrane-spanning segment. Residues Trp65–Lys92 lie on the Extracellular side of the membrane. Residues Phe93 to Phe113 form a helical membrane-spanning segment. Residues Ser114 to Lys124 lie on the Cytoplasmic side of the membrane. Residues Phe125–Ala145 form a helical membrane-spanning segment. Topologically, residues Ala146–Arg177 are extracellular. The helical transmembrane segment at Leu178–Ala198 threads the bilayer. The Cytoplasmic portion of the chain corresponds to Asn199 to Val206.

This sequence belongs to the Casparian strip membrane proteins (CASP) family. In terms of assembly, homodimer and heterodimers.

The protein localises to the cell membrane. This Vitis vinifera (Grape) protein is CASP-like protein 1F1.